Consider the following 387-residue polypeptide: Intraflagellar transport protein 57 (387 aa).

The protein belongs to the IFT57 family.

The protein localises to the cell projection. Its subcellular location is the cilium. It is found in the flagellum. It localises to the cytoplasm. The protein resides in the cytoskeleton. The protein localises to the flagellum axoneme. Its subcellular location is the flagellum basal body. Functionally, component of the intraflagellar transport complex B (IFT-B) involved in flagellar assembly. In Giardia intestinalis (strain ATCC 50803 / WB clone C6) (Giardia lamblia), this protein is Intraflagellar transport protein 57.